The following is a 293-amino-acid chain: Protease HtpX (293 aa).

A run of 2 helical transmembrane segments spans residues 4–24 (IALF…VLSL) and 34–54 (GLMI…LLMS). H139 is a binding site for Zn(2+). E140 is an active-site residue. H143 contributes to the Zn(2+) binding site. The next 2 helical transmembrane spans lie at 158-178 (IVNT…AGFL) and 193-213 (MVYF…ASII). Residue E222 coordinates Zn(2+).

It belongs to the peptidase M48B family. Zn(2+) serves as cofactor.

Its subcellular location is the cell inner membrane. The sequence is that of Protease HtpX from Yersinia enterocolitica serotype O:8 / biotype 1B (strain NCTC 13174 / 8081).